A 165-amino-acid chain; its full sequence is ATP synthase subunit b (165 aa).

Residues 5–27 (INSTTLGNIIITLGSVFLLYYLI) traverse the membrane as a helical segment.

Belongs to the ATPase B chain family. F-type ATPases have 2 components, F(1) - the catalytic core - and F(0) - the membrane proton channel. F(1) has five subunits: alpha(3), beta(3), gamma(1), delta(1), epsilon(1). F(0) has three main subunits: a(1), b(2) and c(10-14). The alpha and beta chains form an alternating ring which encloses part of the gamma chain. F(1) is attached to F(0) by a central stalk formed by the gamma and epsilon chains, while a peripheral stalk is formed by the delta and b chains.

It is found in the cell membrane. Functionally, f(1)F(0) ATP synthase produces ATP from ADP in the presence of a proton or sodium gradient. F-type ATPases consist of two structural domains, F(1) containing the extramembraneous catalytic core and F(0) containing the membrane proton channel, linked together by a central stalk and a peripheral stalk. During catalysis, ATP synthesis in the catalytic domain of F(1) is coupled via a rotary mechanism of the central stalk subunits to proton translocation. Its function is as follows. Component of the F(0) channel, it forms part of the peripheral stalk, linking F(1) to F(0). The polypeptide is ATP synthase subunit b (Streptococcus thermophilus (strain CNRZ 1066)).